We begin with the raw amino-acid sequence, 55 residues long: UPF0391 membrane protein Sfum_0248 (55 aa).

The next 2 helical transmembrane spans lie at 4–24 and 28–48; these read WALI…GGII and AWIA…SLLS.

This sequence belongs to the UPF0391 family.

The protein localises to the cell membrane. The protein is UPF0391 membrane protein Sfum_0248 of Syntrophobacter fumaroxidans (strain DSM 10017 / MPOB).